The primary structure comprises 724 residues: Probable serine/threonine-protein kinase KKQ8 (724 aa).

Disordered regions lie at residues 1 to 81 (MVMQ…RQRS) and 93 to 188 (HPFR…KDIL). Position 19 is a phosphoserine (Ser19). Positions 45–54 (PYRSSSTSPK) are enriched in low complexity. Residues 95 to 106 (FRQTGSGASNSP) are compositionally biased toward polar residues. A compositionally biased stretch (low complexity) spans 143–162 (RSSSVSSCDSSNGTTSSSDS). Phosphoserine occurs at positions 232, 238, and 241. Polar residues-rich tracts occupy residues 318-329 (NASSLLPNVEKS) and 338-351 (GQSPNDSNRSSPTQ). Positions 318-355 (NASSLLPNVEKSQTNHEKRTGQSPNDSNRSSPTQGRED) are disordered. The Protein kinase domain maps to 412 to 712 (GHPVGLVGAG…VGKLLDMQWM (301 aa)). ATP contacts are provided by residues 418–426 (VGAGAYGEV) and Lys455. Catalysis depends on Asp563, which acts as the Proton acceptor.

The protein belongs to the protein kinase superfamily. CAMK Ser/Thr protein kinase family. NPR/HAL subfamily. HAL5 sub-subfamily.

Its subcellular location is the cytoplasm. It catalyses the reaction L-seryl-[protein] + ATP = O-phospho-L-seryl-[protein] + ADP + H(+). It carries out the reaction L-threonyl-[protein] + ATP = O-phospho-L-threonyl-[protein] + ADP + H(+). This is Probable serine/threonine-protein kinase KKQ8 (KKQ8) from Saccharomyces cerevisiae (strain YJM789) (Baker's yeast).